The sequence spans 240 residues: Large ribosomal subunit protein uL2 (240 aa).

The segment covering 1–11 (MGKRLISQNRG) has biased composition (polar residues). Disordered regions lie at residues 1-26 (MGKRLISQNRGRGTPKYRSPSHKRKG) and 206-240 (GGGRHQHLGKPSSVSRNTSPGRKVGHIASRRTGRK). 2 stretches are compositionally biased toward basic residues: residues 13–26 (GTPKYRSPSHKRKG) and 228–240 (KVGHIASRRTGRK).

Belongs to the universal ribosomal protein uL2 family. In terms of assembly, part of the 50S ribosomal subunit. Forms a bridge to the 30S subunit in the 70S ribosome.

Functionally, one of the primary rRNA binding proteins. Required for association of the 30S and 50S subunits to form the 70S ribosome, for tRNA binding and peptide bond formation. It has been suggested to have peptidyltransferase activity; this is somewhat controversial. Makes several contacts with the 16S rRNA in the 70S ribosome. This chain is Large ribosomal subunit protein uL2, found in Methanococcus vannielii (strain ATCC 35089 / DSM 1224 / JCM 13029 / OCM 148 / SB).